A 159-amino-acid chain; its full sequence is Phosphopantetheine adenylyltransferase (159 aa).

Thr-9 contributes to the substrate binding site. ATP-binding positions include 9–10 (TF) and His-17. Lys-41, Leu-73, and Arg-87 together coordinate substrate. ATP is bound by residues 88–90 (GLR), Glu-98, and 123–129 (YSFISST).

This sequence belongs to the bacterial CoaD family. As to quaternary structure, homohexamer. Mg(2+) is required as a cofactor.

Its subcellular location is the cytoplasm. The enzyme catalyses (R)-4'-phosphopantetheine + ATP + H(+) = 3'-dephospho-CoA + diphosphate. It participates in cofactor biosynthesis; coenzyme A biosynthesis; CoA from (R)-pantothenate: step 4/5. Functionally, reversibly transfers an adenylyl group from ATP to 4'-phosphopantetheine, yielding dephospho-CoA (dPCoA) and pyrophosphate. The protein is Phosphopantetheine adenylyltransferase of Pseudomonas putida (strain GB-1).